A 346-amino-acid chain; its full sequence is Peripherin-2 (346 aa).

At 1–24 the chain is on the cytoplasmic side; it reads MALLKVKFDQKKRVKLAQGLWLMN. A helical membrane pass occupies residues 25–43; the sequence is WLSVLAGIVLFSLGLFLKI. The Lumenal portion of the chain corresponds to 44-61; it reads ELRKRSDVMDNSESHFVP. Residues 62–80 traverse the membrane as a helical segment; it reads NSLIGVGVLSCVFNSLAGK. The Cytoplasmic portion of the chain corresponds to 81 to 99; that stretch reads ICYDALDPAKYAKWKPWLK. Residues 100–123 traverse the membrane as a helical segment; the sequence is LYLAVCVFFNVILFLVALCCFLLR. Residues 124-264 are Lumenal-facing; the sequence is GSLESTLAYG…LNYYSSLMNS (141 aa). N-linked (GlcNAc...) asparagine glycosylation is present at N229. Residues 265–290 form a helical membrane-spanning segment; sequence MGVVTLLIWLFEVSITAGLRFLHTAL. Over 291 to 346 the chain is Cytoplasmic; the sequence is ESVSNPEDPECESEGWLLENSVSETWKAFLESFKKLGKSNQVEAEAADAGQAPEAG. The tract at residues 341-346 is interaction with MREG; the sequence is QAPEAG.

Belongs to the PRPH2/ROM1 family. Homodimer; disulfide-linked. Forms a homotetramer. Forms a heterotetramer with ROM1. Homotetramer and heterotetramer core complexes go on to form higher order complexes by formation of intermolecular disulfide bonds. Interacts with MREG. Interacts with STX3. Interacts with SNAP25. In terms of tissue distribution, retina (photoreceptor). In rim region of ROS (rod outer segment) disks.

Its subcellular location is the membrane. It is found in the cell projection. The protein resides in the cilium. The protein localises to the photoreceptor outer segment. It localises to the photoreceptor inner segment. Essential for retina photoreceptor outer segment disk morphogenesis, may also play a role with ROM1 in the maintenance of outer segment disk structure. Required for the maintenance of retinal outer nuclear layer thickness. Required for the correct development and organization of the photoreceptor inner segment. The chain is Peripherin-2 (Prph2) from Rattus norvegicus (Rat).